The primary structure comprises 162 residues: Anaerobic nitrite reductase NSHB2 (162 aa).

In terms of domain architecture, Globin spans 16 to 159 (SFSEEQEALV…LVAAIKQEMK (144 aa)). Residues 49–53 (EVAPS) carry the Homodimerization motif. Residues Ser-59, Lys-73, His-77, Arg-100, Thr-104, and His-105 each coordinate heme b. The short motif at 112-124 (DAHFEVTRFALLE) is the Homodimerization element.

The protein belongs to the plant globin family. As to quaternary structure, homodimer. Heme b is required as a cofactor. As to expression, mainly expressed in germinating seeds, seedlings, roots, flowers and leaves.

Its subcellular location is the cytoplasm. The protein localises to the nucleus. The catalysed reaction is Fe(III)-heme b-[protein] + nitric oxide + H2O = Fe(II)-heme b-[protein] + nitrite + 2 H(+). Phytoglobin that reduces nitrite to nitric oxide under anoxic conditions (e.g. during flooding or in waterlogged soil). May not function as an oxygen storage or transport protein. Has an unusually high affinity for O(2) through an hexacoordinate heme iron because of a very low dissociation constant. Promotes tolerance to low potassium K(+) conditions. The chain is Anaerobic nitrite reductase NSHB2 from Oryza sativa subsp. indica (Rice).